We begin with the raw amino-acid sequence, 131 residues long: UPF0212 protein TK1194 (131 aa).

Belongs to the UPF0212 family.

The polypeptide is UPF0212 protein TK1194 (Thermococcus kodakarensis (strain ATCC BAA-918 / JCM 12380 / KOD1) (Pyrococcus kodakaraensis (strain KOD1))).